The primary structure comprises 503 residues: MVTKERNAALKIVMLVASALTLHPQQALAQTAGRPLADVVGKTLCTYSKTAKRQAANLAQTLQRASSAAKQSRQAQQLAALALAKLPDYKEAAATLLIYATHKIQDAQASIENWTGENTKLVGQAMYSSGRIDELMLLLEGHREDGANGQDKTCLGAAAGGNTVNEFVKTECDTESGHNIEADNSNIGQAATTLSQESTDPEASGGASCKITANLATDYDSHANELPLLGGLLTIHNAGGFKTGQSLQTAAPTNKLISALKNKGAGVAAKLATVTSAAPTSKQELKTLLASKGERAKLQAANDEYNNWKPGAKPEDFDAHIKKVFGAEDGKDSAYAIALEGISIEAPLGGGQTQNKQLYSMQPKDLMAALIGTIAELQTAAATKPACPGHKQTTTESDALCSKIKDANECNSKHFCSYNGTETDSAKKCKYNATKASASDAPVTQAQTTSRSETPAEKCTGKKKDDCKDGCKWEAETCKDSSILLTKNFALSVVSAALVALLF.

The signal sequence occupies residues 1–29 (MVTKERNAALKIVMLVASALTLHPQQALA). 2 cysteine pairs are disulfide-bonded: Cys45/Cys172 and Cys154/Cys209. Asn113 is a glycosylation site (N-linked (GlcNAc...) asparagine). Residues Asn419 and Asn432 are each glycosylated (N-linked (GlcNAc...) asparagine). Asp480 carries GPI-anchor amidated aspartate lipidation. Residues 481 to 503 (SSILLTKNFALSVVSAALVALLF) constitute a propeptide, removed in mature form.

It localises to the cell membrane. VSG forms a coat on the surface of the parasite. The trypanosome evades the immune response of the host by expressing a series of antigenically distinct VSGs from an estimated 1000 VSG genes. The sequence is that of Variant surface glycoprotein AnTaT 1.1 from Trypanosoma brucei brucei.